The chain runs to 439 residues: Serine hydroxymethyltransferase (439 aa).

127–129 (AHV) contacts (6S)-5,6,7,8-tetrahydrofolate. K233 carries the N6-(pyridoxal phosphate)lysine modification.

This sequence belongs to the SHMT family. As to quaternary structure, homodimer. Pyridoxal 5'-phosphate serves as cofactor.

Its subcellular location is the cytoplasm. It participates in amino-acid biosynthesis; glycine biosynthesis; glycine from L-serine: step 1/1. In terms of biological role, catalyzes the reversible interconversion of serine and glycine with a modified folate serving as the one-carbon carrier. Also exhibits a pteridine-independent aldolase activity toward beta-hydroxyamino acids, producing glycine and aldehydes, via a retro-aldol mechanism. This is Serine hydroxymethyltransferase from Aeropyrum pernix (strain ATCC 700893 / DSM 11879 / JCM 9820 / NBRC 100138 / K1).